We begin with the raw amino-acid sequence, 393 residues long: 4-hydroxyphenylpyruvate dioxygenase (393 aa).

VOC domains lie at 17–148 (AFDH…LLER) and 179–339 (FLDH…IFSK). Residues histidine 182, histidine 267, and glutamate 350 each coordinate Fe cation.

The protein belongs to the 4HPPD family. It depends on Fe cation as a cofactor.

It carries out the reaction 3-(4-hydroxyphenyl)pyruvate + O2 = homogentisate + CO2. The protein operates within amino-acid degradation; L-phenylalanine degradation; acetoacetate and fumarate from L-phenylalanine: step 3/6. In terms of biological role, key enzyme in the degradation of tyrosine. The polypeptide is 4-hydroxyphenylpyruvate dioxygenase (hpd-1) (Caenorhabditis briggsae).